The following is a 240-amino-acid chain: Probable septum site-determining protein MinC (240 aa).

Belongs to the MinC family. Interacts with MinD and FtsZ.

Functionally, cell division inhibitor that blocks the formation of polar Z ring septums. Rapidly oscillates between the poles of the cell to destabilize FtsZ filaments that have formed before they mature into polar Z rings. Prevents FtsZ polymerization. The sequence is that of Probable septum site-determining protein MinC from Chromobacterium violaceum (strain ATCC 12472 / DSM 30191 / JCM 1249 / CCUG 213 / NBRC 12614 / NCIMB 9131 / NCTC 9757 / MK).